We begin with the raw amino-acid sequence, 926 residues long: LPS-assembly protein LptD (926 aa).

The first 22 residues, 1 to 22, serve as a signal peptide directing secretion; the sequence is MALKSPAFRKKFPLLVTGSLLA. The segment at 58-99 is disordered; it reads VDLPPRPVHDTTSVSSNGTVTSQSTSSGEQVAGTQLVTEAKG. Residues 68-85 are compositionally biased toward low complexity; sequence TTSVSSNGTVTSQSTSSG.

It belongs to the LptD family. In terms of assembly, component of the lipopolysaccharide transport and assembly complex. Interacts with LptE and LptA.

Its subcellular location is the cell outer membrane. Together with LptE, is involved in the assembly of lipopolysaccharide (LPS) at the surface of the outer membrane. This Pseudomonas savastanoi pv. phaseolicola (strain 1448A / Race 6) (Pseudomonas syringae pv. phaseolicola (strain 1448A / Race 6)) protein is LPS-assembly protein LptD.